The primary structure comprises 407 residues: Prolyl hydroxylase EGLN2 (407 aa).

Low complexity-rich tracts occupy residues 1-24 and 57-75; these read MDSPCQPQPLSQALPQLPGSSSEP and ASAGSGTPRATATSTTASP. 3 disordered regions span residues 1-34, 50-89, and 108-157; these read MDSPCQPQPLSQALPQLPGSSSEPLEPEPGRARM, CPGVPSEASAGSGTPRATATSTTASPLRDGFGGQDGGELR, and AAQG…CSSG. Residues 89–134 carry the Bipartite nuclear localization signal motif; that stretch reads RPLQSEGAAALVTKGCQRLAAQGARPEAPKRKWAEDGGDAPSPSKR. The residue at position 130 (serine 130) is a Phosphoserine. The tract at residues 225-235 is beta(2)beta(3) 'finger-like' loop; the sequence is VSQRAIPPRSI. The Fe2OG dioxygenase domain maps to 278–376; sequence GRTKAMVACY…RYAITVWYFD (99 aa). Residues histidine 297, aspartate 299, and histidine 358 each contribute to the Fe cation site. A 2-oxoglutarate-binding site is contributed by arginine 367.

In terms of assembly, interacts (preferably isoform p40) with SIAH2; the interaction targets both SIAH2 isoforms for proteasomal degradation in vitro. Interacts with LIMD1, WTIP and AJUBA. Requires Fe(2+) as cofactor. The cofactor is L-ascorbate. In terms of processing, ubiquitinated by SIAH1 and/or SIAH2 in response to the unfolded protein response (UPR), leading to its degradation. As to expression, expressed in adult and fetal heart, brain, liver, lung, skeletal muscle, and kidney. Also expressed in testis and placenta. Highest levels in adult brain, placenta, lung, kidney, and testis. Expressed in hormone responsive tissues, including normal and cancerous mammary, ovarian and prostate epithelium.

It localises to the nucleus. It carries out the reaction L-prolyl-[protein] + 2-oxoglutarate + O2 = trans-4-hydroxy-L-prolyl-[protein] + succinate + CO2. It catalyses the reaction L-prolyl-[hypoxia-inducible factor alpha subunit] + 2-oxoglutarate + O2 = trans-4-hydroxy-L-prolyl-[hypoxia-inducible factor alpha subunit] + succinate + CO2. Functionally, prolyl hydroxylase that mediates hydroxylation of proline residues in target proteins, such as ATF4, IKBKB, CEP192 and HIF1A. Target proteins are preferentially recognized via a LXXLAP motif. Cellular oxygen sensor that catalyzes, under normoxic conditions, the post-translational formation of 4-hydroxyproline in hypoxia-inducible factor (HIF) alpha proteins. Hydroxylates a specific proline found in each of the oxygen-dependent degradation (ODD) domains (N-terminal, NODD, and C-terminal, CODD) of HIF1A. Also hydroxylates HIF2A. Has a preference for the CODD site for both HIF1A and HIF2A. Hydroxylated HIFs are then targeted for proteasomal degradation via the von Hippel-Lindau ubiquitination complex. Under hypoxic conditions, the hydroxylation reaction is attenuated allowing HIFs to escape degradation resulting in their translocation to the nucleus, heterodimerization with HIF1B, and increased expression of hypoxy-inducible genes. EGLN2 is involved in regulating hypoxia tolerance and apoptosis in cardiac and skeletal muscle. Also regulates susceptibility to normoxic oxidative neuronal death. Links oxygen sensing to cell cycle and primary cilia formation by hydroxylating the critical centrosome component CEP192 which promotes its ubiquitination and subsequent proteasomal degradation. Hydroxylates IKBKB, mediating NF-kappa-B activation in hypoxic conditions. Also mediates hydroxylation of ATF4, leading to decreased protein stability of ATF4. In Homo sapiens (Human), this protein is Prolyl hydroxylase EGLN2.